The following is a 178-amino-acid chain: Caveolin-1 (178 aa).

Position 2 is an N-acetylserine (Ser2). Ser2 carries the phosphoserine modification. Residues Ser2–Val94 are required for homooligomerization. The Cytoplasmic segment spans residues Ser2 to Ser104. Position 5 is an N6-acetyllysine; alternate (Lys5). A Glycyl lysine isopeptide (Lys-Gly) (interchain with G-Cter in ubiquitin); alternate cross-link involves residue Lys5. Tyr6 is subject to Phosphotyrosine. Ser9 is subject to Phosphoserine. At Tyr14 the chain carries Phosphotyrosine; by ABL1. Tyr25 is modified (phosphotyrosine). Residues Lys26, Lys30, Lys39, Lys47, and Lys57 each participate in a glycyl lysine isopeptide (Lys-Gly) (interchain with G-Cter in ubiquitin) cross-link. The tract at residues Asp82–Val94 is interaction with CAVIN3. Residues Ala105–Leu125 constitute an intramembrane region (helical). Residues His126 to Ile178 lie on the Cytoplasmic side of the membrane. The interacts with SPRY1, SPRY2, SPRY3 and SPRY4 stretch occupies residues Val131–Gln142. Residues Cys133, Cys143, and Cys156 are each lipidated (S-palmitoyl cysteine). An interacts with SPRY1, SPRY2, and SPRY4 region spans residues Ser149–Phe160. An interacts with SPRY1, SPRY2, SPRY3 and SPRY4 region spans residues Phe167–Ile178.

The protein belongs to the caveolin family. In terms of assembly, homooligomer. Interacts with GLIPR2. Interacts with NOSTRIN. Interacts with SNAP25 and STX1A. Interacts (via the N-terminus) with DPP4; the interaction is direct. Interacts with CTNNB1, CDH1 and JUP. Interacts with PACSIN2; this interaction induces membrane tubulation. Interacts with SLC7A9. Interacts with BMX and BTK. Interacts with TGFBR1. Interacts with CAVIN3 (via leucine-zipper domain) in a cholesterol-sensitive manner. Interacts with CAVIN1. Interacts with EHD2 in a cholesterol-dependent manner. Forms a ternary complex with UBXN6 and VCP; mediates CAV1 targeting to lysosomes for degradation. Interacts with ABCG1; this interaction regulates ABCG1-mediated cholesterol efflux. Interacts with NEU3; this interaction enhances NEU3 sialidase activity within caveola. Interacts (via C-terminus) with SPRY1, SPRY2 (via C-terminus), SPRY3, and SPRY4. Interacts with IGFBP5; this interaction allows trafficking of IGFBP5 from the plasma membrane to the nucleus. Post-translationally, phosphorylated at Tyr-14 by ABL1 in response to oxidative stress. Ubiquitinated. Undergo monoubiquitination and multi- and/or polyubiquitination. Monoubiquitination of N-terminal lysines promotes integration in a ternary complex with UBXN6 and VCP which promotes oligomeric CAV1 targeting to lysosomes for degradation. Ubiquitinated by ZNRF1; leading to degradation and modulation of the TLR4-mediated immune response.

It is found in the golgi apparatus membrane. Its subcellular location is the cell membrane. The protein resides in the membrane. The protein localises to the caveola. It localises to the membrane raft. May act as a scaffolding protein within caveolar membranes. Forms a stable heterooligomeric complex with CAV2 that targets to lipid rafts and drives caveolae formation. Mediates the recruitment of CAVIN proteins (CAVIN1/2/3/4) to the caveolae. Interacts directly with G-protein alpha subunits and can functionally regulate their activity. Involved in the costimulatory signal essential for T-cell receptor (TCR)-mediated T-cell activation. Its binding to DPP4 induces T-cell proliferation and NF-kappa-B activation in a T-cell receptor/CD3-dependent manner. Recruits CTNNB1 to caveolar membranes and may regulate CTNNB1-mediated signaling through the Wnt pathway. Negatively regulates TGFB1-mediated activation of SMAD2/3 by mediating the internalization of TGFBR1 from membrane rafts leading to its subsequent degradation. Binds 20(S)-hydroxycholesterol (20(S)-OHC). The chain is Caveolin-1 (CAV1) from Muntiacus reevesi (Reeves' muntjac).